Here is a 159-residue protein sequence, read N- to C-terminus: Putative transmembrane protein ORF159 (159 aa).

A run of 2 helical transmembrane segments spans residues 20 to 40 (LLLS…LSLF) and 59 to 79 (IIAV…GFCC). Residues 106 to 108 (RGD) carry the Cell attachment site motif.

The protein resides in the host membrane. This is Putative transmembrane protein ORF159 from Acidianus sp. F28 (AFV-2).